Reading from the N-terminus, the 376-residue chain is Heat-inducible transcription repressor HrcA (376 aa).

This sequence belongs to the HrcA family.

In terms of biological role, negative regulator of class I heat shock genes (grpE-dnaK-dnaJ and groELS operons). Prevents heat-shock induction of these operons. This is Heat-inducible transcription repressor HrcA from Chloroflexus aggregans (strain MD-66 / DSM 9485).